The following is a 332-amino-acid chain: Phosphate acyltransferase (332 aa).

Belongs to the PlsX family. Homodimer. Probably interacts with PlsY.

The protein resides in the cytoplasm. It catalyses the reaction a fatty acyl-[ACP] + phosphate = an acyl phosphate + holo-[ACP]. Its pathway is lipid metabolism; phospholipid metabolism. Catalyzes the reversible formation of acyl-phosphate (acyl-PO(4)) from acyl-[acyl-carrier-protein] (acyl-ACP). This enzyme utilizes acyl-ACP as fatty acyl donor, but not acyl-CoA. The polypeptide is Phosphate acyltransferase (Bacillus pumilus (strain SAFR-032)).